Here is a 207-residue protein sequence, read N- to C-terminus: Protein N-terminal glutamine amidohydrolase (207 aa).

Active-site residues include Cys-30, His-83, and Asp-99.

The protein belongs to the NTAQ1 family. As to quaternary structure, monomer.

It localises to the cytoplasm. It is found in the cytosol. The protein localises to the nucleus. It catalyses the reaction N-terminal L-glutaminyl-[protein] + H2O = N-terminal L-glutamyl-[protein] + NH4(+). Functionally, mediates the side-chain deamidation of N-terminal glutamine residues to glutamate, an important step in N-end rule pathway of protein degradation. Conversion of the resulting N-terminal glutamine to glutamate renders the protein susceptible to arginylation, polyubiquitination and degradation as specified by the N-end rule. Does not act on substrates with internal or C-terminal glutamine and does not act on non-glutamine residues in any position. Does not deaminate acetylated N-terminal glutamine. With the exception of proline, all tested second-position residues on substrate peptides do not greatly influence the activity. In contrast, a proline at position 2, virtually abolishes deamidation of N-terminal glutamine. The polypeptide is Protein N-terminal glutamine amidohydrolase (NTAQ1) (Bos taurus (Bovine)).